A 369-amino-acid polypeptide reads, in one-letter code: Beta-1,4-galactosyltransferase 2 (369 aa).

At 1–15 the chain is on the cytoplasmic side; it reads MSRLLGGTLERVCKA. The chain crosses the membrane as a helical; Signal-anchor for type II membrane protein span at residues 16–36; it reads VLLLCLLHFLVAVILYFDVYA. Over 37–369 the chain is Lumenal; that stretch reads QHLAFFSRFS…GRPMSWLNQG (333 aa). Polar residues predominate over residues 59 to 75; sequence SSSTNCSRPNATASSSG. Residues 59–90 are disordered; that stretch reads SSSTNCSRPNATASSSGLPEVPSARPGPTAPV. Residues Asn63 and Asn68 are each glycosylated (N-linked (GlcNAc...) asparagine). The cysteines at positions 94 and 136 are disulfide-linked. Residues 147–151, 186–188, 214–215, and Trp275 contribute to the UDP-alpha-D-galactose site; these read PFRHR, FNR, and VD. Cysteines 208 and 227 form a disulfide. Mn(2+) is bound at residue Asp215. 277 to 280 is a binding site for N-acetyl-D-glucosamine; sequence GEDD. His308 is a binding site for Mn(2+). A UDP-alpha-D-galactose-binding site is contributed by 308 to 310; it reads HDR. An N-acetyl-D-glucosamine-binding site is contributed by Arg320. Asn354 carries an N-linked (GlcNAc...) asparagine glycan.

Belongs to the glycosyltransferase 7 family. Mn(2+) is required as a cofactor.

It is found in the golgi apparatus. It localises to the golgi stack membrane. It carries out the reaction D-glucose + UDP-alpha-D-galactose = lactose + UDP + H(+). The enzyme catalyses an N-acetyl-beta-D-glucosaminyl derivative + UDP-alpha-D-galactose = a beta-D-galactosyl-(1-&gt;4)-N-acetyl-beta-D-glucosaminyl derivative + UDP + H(+). The catalysed reaction is N-acetyl-D-glucosamine + UDP-alpha-D-galactose = beta-D-galactosyl-(1-&gt;4)-N-acetyl-D-glucosamine + UDP + H(+). It functions in the pathway protein modification; protein glycosylation. Responsible for the synthesis of complex-type N-linked oligosaccharides in many glycoproteins as well as the carbohydrate moieties of glycolipids. Can produce lactose. This is Beta-1,4-galactosyltransferase 2 (B4GALT2) from Cricetulus griseus (Chinese hamster).